A 194-amino-acid chain; its full sequence is Imidazoleglycerol-phosphate dehydratase (194 aa).

It belongs to the imidazoleglycerol-phosphate dehydratase family.

It is found in the cytoplasm. The catalysed reaction is D-erythro-1-(imidazol-4-yl)glycerol 3-phosphate = 3-(imidazol-4-yl)-2-oxopropyl phosphate + H2O. It functions in the pathway amino-acid biosynthesis; L-histidine biosynthesis; L-histidine from 5-phospho-alpha-D-ribose 1-diphosphate: step 6/9. In Ruminiclostridium cellulolyticum (strain ATCC 35319 / DSM 5812 / JCM 6584 / H10) (Clostridium cellulolyticum), this protein is Imidazoleglycerol-phosphate dehydratase.